A 634-amino-acid polypeptide reads, in one-letter code: Chaperone protein dnaK2 (634 aa).

Position 197 is a phosphothreonine; by autocatalysis (T197). The interval 592 to 634 (IGSSVYQQPGNQPPAPGTPDSNESNDKGGDDDVIDADFTETKD) is disordered. Residues 622 to 634 (DDVIDADFTETKD) show a composition bias toward acidic residues.

Belongs to the heat shock protein 70 family.

Functionally, acts as a chaperone. The sequence is that of Chaperone protein dnaK2 (dnaK2) from Prochlorococcus marinus subsp. pastoris (strain CCMP1986 / NIES-2087 / MED4).